The chain runs to 226 residues: Glutathione peroxidase 3 (226 aa).

The first 24 residues, 1–24, serve as a signal peptide directing secretion; sequence MARLLQASCLLSLLLAGFVPQSRG. Residue U73 is part of the active site. A non-standard amino acid (selenocysteine) is located at residue U73.

It belongs to the glutathione peroxidase family. As to quaternary structure, homotetramer. In terms of tissue distribution, secreted in plasma.

Its subcellular location is the secreted. It catalyses the reaction 2 glutathione + H2O2 = glutathione disulfide + 2 H2O. The catalysed reaction is tert-butyl hydroperoxide + 2 glutathione = tert-butanol + glutathione disulfide + H2O. Functionally, protects cells and enzymes from oxidative damage, by catalyzing the reduction of hydrogen peroxide, lipid peroxides and organic hydroperoxide, by glutathione. This is Glutathione peroxidase 3 from Pongo pygmaeus (Bornean orangutan).